The following is a 773-amino-acid chain: Photosystem I P700 chlorophyll a apoprotein A1 (773 aa).

The interval methionine 1 to aspartate 27 is disordered. 8 helical membrane-spanning segments follow: residues isoleucine 80–alanine 103, leucine 166–histidine 189, leucine 205–alanine 229, isoleucine 315–tryptophan 333, tryptophan 375–tyrosine 398, leucine 414–isoleucine 440, alanine 462–histidine 484, and leucine 564–leucine 582. [4Fe-4S] cluster contacts are provided by cysteine 606 and cysteine 615. A run of 2 helical transmembrane segments spans residues histidine 622 to tryptophan 643 and isoleucine 687 to phenylalanine 709. Histidine 698 is a binding site for divinylchlorophyll a'. Divinyl chlorophyll a contacts are provided by methionine 706 and tyrosine 714. Residue tryptophan 715 participates in phylloquinone binding. A helical membrane pass occupies residues alanine 747–alanine 767.

The protein belongs to the PsaA/PsaB family. The PsaA/B heterodimer binds the P700 divinyl chlorophyll special pair and subsequent electron acceptors. PSI consists of a core antenna complex that captures photons, and an electron transfer chain that converts photonic excitation into a charge separation. The cyanobacterial PSI reaction center is composed of one copy each of PsaA,B,C,D,E,F,I,J,K,L,M and X, and forms trimeric complexes. Requires PSI electron transfer chain: 5 divinyl chlorophyll a, 1 divinyl chlorophyll a', 2 phylloquinones and 3 4Fe-4S clusters. PSI core antenna: 90 divinyl chlorophyll a, 22 carotenoids, 3 phospholipids and 1 galactolipid. P700 is a divinyl chlorophyll a/divinyl chlorophyll a' dimer, A0 is one or more divinylchlorophyll a, A1 is one or both phylloquinones and FX is a shared 4Fe-4S iron-sulfur center. as cofactor.

It localises to the cellular thylakoid membrane. The catalysed reaction is reduced [plastocyanin] + hnu + oxidized [2Fe-2S]-[ferredoxin] = oxidized [plastocyanin] + reduced [2Fe-2S]-[ferredoxin]. In terms of biological role, psaA and PsaB bind P700, the primary electron donor of photosystem I (PSI), as well as the electron acceptors A0, A1 and FX. PSI is a plastocyanin/cytochrome c6-ferredoxin oxidoreductase, converting photonic excitation into a charge separation, which transfers an electron from the donor P700 chlorophyll pair to the spectroscopically characterized acceptors A0, A1, FX, FA and FB in turn. Oxidized P700 is reduced on the lumenal side of the thylakoid membrane by plastocyanin or cytochrome c6. In Prochlorococcus marinus (strain SARG / CCMP1375 / SS120), this protein is Photosystem I P700 chlorophyll a apoprotein A1.